Here is an 83-residue protein sequence, read N- to C-terminus: MREVTVRKGEPIDRALKRLKTKLDVEGILDEMRRRRAFETPMDERRRKARSASKRNKVKWRYSNKSEETASETAETPASAPEA.

The segment at 40 to 83 (TPMDERRRKARSASKRNKVKWRYSNKSEETASETAETPASAPEA) is disordered. Residues 47-62 (RKARSASKRNKVKWRY) are compositionally biased toward basic residues. The segment covering 71–83 (SETAETPASAPEA) has biased composition (low complexity).

This sequence belongs to the bacterial ribosomal protein bS21 family.

The polypeptide is Small ribosomal subunit protein bS21 (Akkermansia muciniphila (strain ATCC BAA-835 / DSM 22959 / JCM 33894 / BCRC 81048 / CCUG 64013 / CIP 107961 / Muc)).